Reading from the N-terminus, the 348-residue chain is Hereditary hemochromatosis protein homolog (348 aa).

A signal peptide spans 1–22 (MGPRARPALFFLILLRTVAAQG). Residues 23–114 (RPPRSHSLRY…IMDNHNHSKE (92 aa)) are alpha-1. Topologically, residues 23-306 (RPPRSHSLRY…WEPSLSNTLV (284 aa)) are extracellular. N-linked (GlcNAc...) asparagine glycosylation is found at asparagine 110, asparagine 130, and asparagine 234. The segment at 115–205 (SHTLQVILGC…ELGRGVLDQQ (91 aa)) is alpha-2. 2 disulfides stabilise this stretch: cysteine 124–cysteine 187 and cysteine 225–cysteine 282. The alpha-3 stretch occupies residues 206-297 (VPPLVKVTHH…GLDQPLTATW (92 aa)). Residues 207 to 296 (PPLVKVTHHV…PGLDQPLTAT (90 aa)) form the Ig-like C1-type domain. A connecting peptide region spans residues 298 to 306 (EPSLSNTLV). The helical transmembrane segment at 307–330 (TGVISGIAVCVIIFLIGILFRILR) threads the bilayer. Residues 331–348 (KRQASRGAMGDYVLAECE) are Cytoplasmic-facing.

This sequence belongs to the MHC class I family. Binds TFR through the extracellular domain in a pH-dependent manner.

It is found in the cell membrane. Binds to transferrin receptor (TFR) and reduces its affinity for iron-loaded transferrin. The chain is Hereditary hemochromatosis protein homolog (HFE) from Dicerorhinus sumatrensis (Sumatran rhinoceros).